Here is an 855-residue protein sequence, read N- to C-terminus: Sucrose synthase 7 (855 aa).

The GT-B glycosyltransferase stretch occupies residues 279–758 (SIFNIVIFSI…GLQRIYECYT (480 aa)).

The protein belongs to the glycosyltransferase 1 family. Plant sucrose synthase subfamily. As to expression, predominantly expressed in roots, flowers and immature seeds.

The protein localises to the cytoplasm. Its subcellular location is the membrane. The enzyme catalyses an NDP-alpha-D-glucose + D-fructose = a ribonucleoside 5'-diphosphate + sucrose + H(+). Functionally, sucrose-cleaving enzyme that provides UDP-glucose and fructose for various metabolic pathways. This is Sucrose synthase 7 (SUS7) from Oryza sativa subsp. japonica (Rice).